The following is a 632-amino-acid chain: Biosynthetic arginine decarboxylase (632 aa).

Lysine 101 is modified (N6-(pyridoxal phosphate)lysine). Position 281–291 (281–291 (FDVGGGLGVDY)) interacts with substrate.

The protein belongs to the Orn/Lys/Arg decarboxylase class-II family. SpeA subfamily. It depends on Mg(2+) as a cofactor. Requires pyridoxal 5'-phosphate as cofactor.

It catalyses the reaction L-arginine + H(+) = agmatine + CO2. It participates in amine and polyamine biosynthesis; agmatine biosynthesis; agmatine from L-arginine: step 1/1. Functionally, catalyzes the biosynthesis of agmatine from arginine. The chain is Biosynthetic arginine decarboxylase from Salmonella agona (strain SL483).